The sequence spans 123 residues: Large ribosomal subunit protein bL21 (123 aa).

It belongs to the bacterial ribosomal protein bL21 family. As to quaternary structure, part of the 50S ribosomal subunit. Contacts protein L20.

In terms of biological role, this protein binds to 23S rRNA in the presence of protein L20. The polypeptide is Large ribosomal subunit protein bL21 (Rippkaea orientalis (strain PCC 8801 / RF-1) (Cyanothece sp. (strain PCC 8801))).